The primary structure comprises 411 residues: Serpin A3-1 (411 aa).

The first 24 residues, 1–24, serve as a signal peptide directing secretion; the sequence is MRAERTSFLLALGLLVAGIRSVHC. N-linked (GlcNAc...) asparagine glycosylation is found at Asn100, Asn180, Asn230, and Asn264.

Belongs to the serpin family. In terms of assembly, homodimer. In terms of processing, N-glycosylated. In terms of tissue distribution, detected in all tissues examined (at protein level). Abundantly expressed in liver, kidney and spleen. Lowest levels were observed in diaphragm muscle.

The protein resides in the cytoplasmic vesicle. It localises to the secretory vesicle. The protein localises to the chromaffin granule. It is found in the secreted. Its function is as follows. Potent inhibitor of the serine proteases elastase and trypsin. Moderately inhibits the serine proteases plasmin and chymotrypsin, and the thiol protease proenkephalin-processing enzyme. Does not inhibit the serine proteases cathepsin G, furin, kallikrein, thrombin, tissue plasminogen activator and urokinase, or the cysteine proteases cathepsin B, cathepsin L and papain. The chain is Serpin A3-1 from Bos taurus (Bovine).